The sequence spans 544 residues: Chaperonin GroEL (544 aa).

ATP-binding positions include 30 to 33, K51, 87 to 91, G415, 478 to 480, and D494; these read TLGP, DGTTT, and NAA.

This sequence belongs to the chaperonin (HSP60) family. As to quaternary structure, forms a cylinder of 14 subunits composed of two heptameric rings stacked back-to-back. Interacts with the co-chaperonin GroES.

The protein localises to the cytoplasm. It catalyses the reaction ATP + H2O + a folded polypeptide = ADP + phosphate + an unfolded polypeptide.. Together with its co-chaperonin GroES, plays an essential role in assisting protein folding. The GroEL-GroES system forms a nano-cage that allows encapsulation of the non-native substrate proteins and provides a physical environment optimized to promote and accelerate protein folding. The protein is Chaperonin GroEL of Geobacter sulfurreducens (strain ATCC 51573 / DSM 12127 / PCA).